The primary structure comprises 492 residues: E3 ubiquitin-protein ligase TRIM35 (492 aa).

The residue at position 1 (M1) is an N-acetylmethionine. A phosphoserine mark is found at S4 and S8. The RING-type zinc-finger motif lies at 21–61 (CAVCYDPFRDAVTLRCGHNFCRGCVSRCWEVQVSPTCPVCK). The B box-type zinc finger occupies 96-137 (RFSRVCRLHRGQLSLFCLEDKELLCCSCQADPRHQGHRVQPV). 4 residues coordinate Zn(2+): C101, H104, C123, and H129. The stretch at 210 to 249 (AEETRQKQLLADEKMKQLTEETEVLAHEIERLQMEMKEDD) forms a coiled coil. Positions 283 to 486 (YLGSLQYRVW…LRICPLHISV (204 aa)) constitute a B30.2/SPRY domain.

As to quaternary structure, interacts with PKM isoform M2, but not isoform M1; this interaction may compete with that between PKM and FGFR1, and hence reduces FGFR1-dependent tyrosine phosphorylation of PKM. Interacts with IRF7; this interaction promotes IRF7 proteasomal degradation. Interacts with TRAF3; this interaction promotes TRAF3 activation.

It is found in the cytoplasm. Its subcellular location is the nucleus. The enzyme catalyses S-ubiquitinyl-[E2 ubiquitin-conjugating enzyme]-L-cysteine + [acceptor protein]-L-lysine = [E2 ubiquitin-conjugating enzyme]-L-cysteine + N(6)-ubiquitinyl-[acceptor protein]-L-lysine.. It functions in the pathway protein modification; protein ubiquitination. E3 ubiquitin-protein ligase that participates in multiple biological processes including cell death, glucose metabolism, and in particular, the innate immune response. Mediates 'Lys-63'-linked polyubiquitination of TRAF3 thereby promoting type I interferon production via RIG-I signaling pathway. Can also catalyze 'Lys-48'-linked polyubiquitination and proteasomal degradation of viral proteins such as influenza virus PB2. Acts as a negative feedback regulator of TLR7- and TLR9-triggered signaling. Mechanistically, promotes the 'Lys-48'-linked ubiquitination of IRF7 and induces its degradation via a proteasome-dependent pathway. Reduces FGFR1-dependent tyrosine phosphorylation of PKM, inhibiting PKM-dependent lactate production, glucose metabolism, and cell growth. The polypeptide is E3 ubiquitin-protein ligase TRIM35 (TRIM35) (Pongo abelii (Sumatran orangutan)).